We begin with the raw amino-acid sequence, 154 residues long: Snaclec EMS16 subunit beta (154 aa).

The signal sequence occupies residues Met-1 to Cys-26. Cys-27 and Cys-38 are oxidised to a cystine. One can recognise a C-type lectin domain in the interval Phe-34–Lys-147. Residue Asn-47 is glycosylated (N-linked (GlcNAc...) asparagine). Disulfide bonds link Cys-55–Cys-146 and Cys-121–Cys-138.

The protein belongs to the snaclec family. Heterodimer of subunits A and B; disulfide-linked. As to expression, expressed by the venom gland.

Its subcellular location is the secreted. EMS16 is a potent and selective inhibitor of alpha-2/beta-1 (ITGA2/ITGB1) integrin and acts as a potent antagonist of platelet aggregation and cell migration. Binds specifically to the I domain of the alpha-2 subunit, in a metal ion-independent fashion. The polypeptide is Snaclec EMS16 subunit beta (Echis multisquamatus (Central Asian sand viper)).